A 646-amino-acid polypeptide reads, in one-letter code: Phosphomethylpyrimidine synthase (646 aa).

Substrate-binding positions include N235, M264, Y293, H329, 349–351 (SRG), 390–393 (DGLR), and E429. H433 lines the Zn(2+) pocket. Position 456 (Y456) interacts with substrate. Residue H497 participates in Zn(2+) binding. [4Fe-4S] cluster-binding residues include C577, C580, and C585.

The protein belongs to the ThiC family. In terms of assembly, homodimer. [4Fe-4S] cluster serves as cofactor.

It catalyses the reaction 5-amino-1-(5-phospho-beta-D-ribosyl)imidazole + S-adenosyl-L-methionine = 4-amino-2-methyl-5-(phosphooxymethyl)pyrimidine + CO + 5'-deoxyadenosine + formate + L-methionine + 3 H(+). Its pathway is cofactor biosynthesis; thiamine diphosphate biosynthesis. Functionally, catalyzes the synthesis of the hydroxymethylpyrimidine phosphate (HMP-P) moiety of thiamine from aminoimidazole ribotide (AIR) in a radical S-adenosyl-L-methionine (SAM)-dependent reaction. This chain is Phosphomethylpyrimidine synthase, found in Vibrio campbellii (strain ATCC BAA-1116).